The primary structure comprises 509 residues: Zinc finger CCCH-type with G patch domain-containing protein (509 aa).

The segment at 155 to 178 (PCNYYLEGECRFDEIRCRYSHGAL) adopts a C3H1-type zinc-finger fold. A disordered region spans residues 254–277 (EDELTSEDSSSSPHDESSDEIDSD). The G-patch domain occupies 310-356 (TRGIGSKLMEKMGYIHGTGLGSEGRGIVTPVSAQILPQGRSLDACME). Residues 407-430 (LGGGESRHQGDQAAKKAKTNDLQQ) are disordered. Residues 411-420 (ESRHQGDQAA) are compositionally biased toward basic and acidic residues.

The protein localises to the nucleus. Functionally, transcription repressor. The chain is Zinc finger CCCH-type with G patch domain-containing protein from Drosophila pseudoobscura pseudoobscura (Fruit fly).